Consider the following 313-residue polypeptide: Tyrosine--tRNA ligase (313 aa).

Tyrosine 32 contributes to the L-tyrosine binding site. A 'HIGH' region motif is present at residues 37-45 (PSGEIHLGH). The L-tyrosine site is built by tyrosine 152, glutamine 156, aspartate 159, and glutamine 174. The 'KMSKS' region motif lies at 208–212 (KMSSS). Residue serine 211 participates in ATP binding.

Belongs to the class-I aminoacyl-tRNA synthetase family. TyrS type 3 subfamily. Homodimer.

It is found in the cytoplasm. It catalyses the reaction tRNA(Tyr) + L-tyrosine + ATP = L-tyrosyl-tRNA(Tyr) + AMP + diphosphate + H(+). In terms of biological role, catalyzes the attachment of tyrosine to tRNA(Tyr) in a two-step reaction: tyrosine is first activated by ATP to form Tyr-AMP and then transferred to the acceptor end of tRNA(Tyr). This chain is Tyrosine--tRNA ligase, found in Methanospirillum hungatei JF-1 (strain ATCC 27890 / DSM 864 / NBRC 100397 / JF-1).